An 880-amino-acid chain; its full sequence is Leucine--tRNA ligase (880 aa).

Residues 46 to 56 (PYPSGALHMGH) carry the 'HIGH' region motif. The short motif at 638 to 642 (KMSKS) is the 'KMSKS' region element. Lys641 provides a ligand contact to ATP.

This sequence belongs to the class-I aminoacyl-tRNA synthetase family.

The protein localises to the cytoplasm. It carries out the reaction tRNA(Leu) + L-leucine + ATP = L-leucyl-tRNA(Leu) + AMP + diphosphate. This chain is Leucine--tRNA ligase, found in Xanthomonas euvesicatoria pv. vesicatoria (strain 85-10) (Xanthomonas campestris pv. vesicatoria).